A 147-amino-acid chain; its full sequence is Chorion class B protein B.L1 (147 aa).

Residues 1-38 form a left arm region; it reads IGCGRGCGGRGYGGLGYGGLGYGGLGYGGLGGGCGRGF. Repeat copies occupy residues 11-15, 16-20, 21-25, and 26-30. The 4 X 5 AA tandem repeats of G-Y-G-G-L stretch occupies residues 11-30; the sequence is GYGGLGYGGLGYGGLGYGGL. Residues 39–107 form a central domain region; that stretch reads SGGGLPVATA…GNGAVGITRE (69 aa). Positions 108–147 are right arm (Gly-rich tandem repeats); the sequence is GGLGYGAGYGGGYGLGYGGYGGGYGLGYGGYGGCGCGCGY.

Belongs to the chorion protein family.

Functionally, this protein is one of many from the eggshell of the silk moth. The protein is Chorion class B protein B.L1 of Bombyx mori (Silk moth).